Here is a 223-residue protein sequence, read N- to C-terminus: Endonuclease V (223 aa).

Mg(2+) is bound by residues Asp35 and Asp103.

Belongs to the endonuclease V family. The cofactor is Mg(2+).

The protein localises to the cytoplasm. The catalysed reaction is Endonucleolytic cleavage at apurinic or apyrimidinic sites to products with a 5'-phosphate.. In terms of biological role, DNA repair enzyme involved in the repair of deaminated bases. Selectively cleaves double-stranded DNA at the second phosphodiester bond 3' to a deoxyinosine leaving behind the intact lesion on the nicked DNA. In Escherichia coli O45:K1 (strain S88 / ExPEC), this protein is Endonuclease V.